The chain runs to 525 residues: Cytochrome P450 4V2 (525 aa).

The helical transmembrane segment at 13 to 33 (LLLWGAASAVSVAGATVLLNI) threads the bilayer. Heme is bound by residues Glu-329 and Cys-467.

It belongs to the cytochrome P450 family. It depends on heme as a cofactor.

The protein localises to the endoplasmic reticulum membrane. The enzyme catalyses dodecanoate + reduced [NADPH--hemoprotein reductase] + O2 = 12-hydroxydodecanoate + oxidized [NADPH--hemoprotein reductase] + H2O + H(+). The catalysed reaction is tetradecanoate + reduced [NADPH--hemoprotein reductase] + O2 = 14-hydroxytetradecanoate + oxidized [NADPH--hemoprotein reductase] + H2O + H(+). It catalyses the reaction hexadecanoate + reduced [NADPH--hemoprotein reductase] + O2 = 16-hydroxyhexadecanoate + oxidized [NADPH--hemoprotein reductase] + H2O + H(+). It carries out the reaction (5Z,8Z,11Z,14Z,17Z)-eicosapentaenoate + reduced [NADPH--hemoprotein reductase] + O2 = 20-hydroxy-(5Z,8Z,11Z,14Z,17Z)-eicosapentaenoate + oxidized [NADPH--hemoprotein reductase] + H2O + H(+). The enzyme catalyses (4Z,7Z,10Z,13Z,16Z,19Z)-docosahexaenoate + reduced [NADPH--hemoprotein reductase] + O2 = 22-hydroxy-(4Z,7Z,10Z,13Z,16Z,19Z)-docosahexaenoate + oxidized [NADPH--hemoprotein reductase] + H2O + H(+). The protein operates within lipid metabolism; fatty acid metabolism. With respect to regulation, inhibited by N-hydroxy-N'-(4-n-butyl-2-methylphenyl formamidine)(HET0016) with an IC(50) of 38 nM. Its function is as follows. A cytochrome P450 monooxygenase involved in fatty acid metabolism in the eye. Catalyzes the omega-hydroxylation of polyunsaturated fatty acids (PUFAs) docosahexaenoate (DHA) and its precursor eicosapentaenoate (EPA), and may contribute to the homeostasis of these retinal PUFAs. Omega hydroxylates saturated fatty acids such as laurate, myristate and palmitate, the catalytic efficiency decreasing in the following order: myristate &gt; laurate &gt; palmitate (C14&gt;C12&gt;C16). Mechanistically, uses molecular oxygen inserting one oxygen atom into a substrate, and reducing the second into a water molecule, with two electrons provided by NADPH via cytochrome P450 reductase (CPR; NADPH-ferrihemoprotein reductase). In Rattus norvegicus (Rat), this protein is Cytochrome P450 4V2 (Cyp4v2).